A 1285-amino-acid chain; its full sequence is MWSGDRSAAAGSGGAVVTVAFTNARDCFLRLPRRLVAQLHLLQNQAIEVTWDRQPTYLSWVEGRHFNDQGENVAEINRQVGQKLGLCSGEQVFLRPCSHVVSCQQVEVEPLSADDWEILELHAVSLEQHLLDQIRIVFPKAVVPIWVDQQTYIFIQIVALMPAVPYGRLETNTELLIQPKTRQAKENTFPKAGDAHGQFRSYGQEQKGMSKELQTKQLHMNTEGIPGSNETDPKVPSDSSWKAHWWTMLGSMFSLGPDNRQATSWGSSEISVFKTMQSQDVPLDSVFRVCRVQPPSVRDTPATSVFHKHCTVHVFPWDQEYFDVEPSFTVTYGKLVKLCSPKQQQGKTKQSVMSPEKEKHPLESPNHKQIGSDHTEEAGEACVLKVVWNGLEELKNTTKFTKSIEPLHLGKVWIPDDLRKRLNVEMHAVVRITPLETTPKIPRSLKLQPRENLPEDVSEDDVRTGFSSWLQQSATTMLPLVISKEERIKLGIKDGLKEFSLSVVHCQEREKGRGETAFVLSAVLLRKISVQVLLEPMIREENSEEIDFLLPFLKLNSLGGVNSLGVSAMEHITHSLLGRPLSRQLMSLVAGLRNGALLVTGGKGSGKSTLAKAICQEACDGLDAHVEIVDCKALRGKRLESIQKALEVAFSEAAWRQPSVILLDDLDFIAGLPTVPEQEHSPEAVQSQRLAHALKDMIKELVSVGSLIALIATSQSQCCLQPLLVSAQGIHTFQCVQHIQPPNQEQRCEILQNVVKNKLGCNINKSSDIDLQRIAKETEGFVARDFTVLVDRAIHSHLSRQPVSTREELTLTTSDFHKALHGFLPASLRNVNLHKPRDLGWDKIGGLHEVRQILMDTIQLPAKYPELFANLPIRQRTGILLYGPPGTGKTLLAGVVARESGMNFISIKGPELLSKYIGASEQAVRDVFTRAQAAKPCILFFDEFESIAPRRGHDNTGVTDRVVNQLLTQLDGVEGLQGVYVLAATSRPDLIDPALLRPGRLDKCVYCPPPDQVSRLEILNVLSASLPLAGDVDLQHMASVTESFTGADLKALLYNAQLEALQGRLLPGGLHDGGSSSDSDLSLSSMVFLNHSSGSDDSAADGESGLDQSLVSLEMSEILPDESKFNMYRLYFGSSYESELGNGTSSDLSSQCPSAPSSVTQDFPAAPGKEPLFTQHPMFRTPSQEGYQELTQEQRDQLKAEISIIKGRYQSQSGEDESLSQPGPIKTSFAISQAHLMTALAHTRPSISEEEEKDFAELYENFQNPKKRKNPSGTVFRPGQKVTLA.

Residues 344-353 (QQGKTKQSVM) are compositionally biased toward polar residues. The segment at 344 to 373 (QQGKTKQSVMSPEKEKHPLESPNHKQIGSD) is disordered. S354 is subject to Phosphoserine. Basic and acidic residues predominate over residues 355 to 373 (PEKEKHPLESPNHKQIGSD). ATP-binding positions include 601–608 (GGKGSGKS) and 883–890 (GPPGTGKT). The span at 1142-1161 (NGTSSDLSSQCPSAPSSVTQ) shows a compositional bias: polar residues. The disordered stretch occupies residues 1142–1162 (NGTSSDLSSQCPSAPSSVTQD). 3 positions are modified to phosphoserine: S1183, S1211, and S1213. Residues 1262 to 1285 (FQNPKKRKNPSGTVFRPGQKVTLA) form a disordered region.

The protein belongs to the AAA ATPase family. In terms of assembly, homooligomer; homooligomerizes in the cytosol, interaction with PEX6 promotes dissociation of the homooligomer. Interacts with PEX6; forming the PEX1-PEX6 AAA ATPase complex, which is composed of a heterohexamer formed by a trimer of PEX1-PEX6 dimers. Interacts indirectly with PEX26, via its interaction with PEX6.

Its subcellular location is the cytoplasm. The protein localises to the cytosol. It is found in the peroxisome membrane. It catalyses the reaction ATP + H2O = ADP + phosphate + H(+). Its function is as follows. Component of the PEX1-PEX6 AAA ATPase complex, a protein dislocase complex that mediates the ATP-dependent extraction of the PEX5 receptor from peroxisomal membranes, an essential step for PEX5 recycling. Specifically recognizes PEX5 monoubiquitinated at 'Cys-11', and pulls it out of the peroxisome lumen through the PEX2-PEX10-PEX12 retrotranslocation channel. Extraction by the PEX1-PEX6 AAA ATPase complex is accompanied by unfolding of the TPR repeats and release of bound cargo from PEX5. In Cricetulus griseus (Chinese hamster), this protein is Peroxisomal ATPase PEX1.